Reading from the N-terminus, the 187-residue chain is Elongation factor P (187 aa).

This sequence belongs to the elongation factor P family.

It is found in the cytoplasm. It participates in protein biosynthesis; polypeptide chain elongation. Involved in peptide bond synthesis. Stimulates efficient translation and peptide-bond synthesis on native or reconstituted 70S ribosomes in vitro. Probably functions indirectly by altering the affinity of the ribosome for aminoacyl-tRNA, thus increasing their reactivity as acceptors for peptidyl transferase. This chain is Elongation factor P, found in Brachyspira hyodysenteriae (strain ATCC 49526 / WA1).